A 598-amino-acid chain; its full sequence is DNA primase (598 aa).

The CHC2-type zinc-finger motif lies at cysteine 38–cysteine 62. Residues aspartate 260–glycine 341 form the Toprim domain. Residues glutamate 266, aspartate 310, and aspartate 312 each contribute to the Mg(2+) site.

The protein belongs to the DnaG primase family. In terms of assembly, monomer. Interacts with DnaB. It depends on Zn(2+) as a cofactor. The cofactor is Mg(2+).

The catalysed reaction is ssDNA + n NTP = ssDNA/pppN(pN)n-1 hybrid + (n-1) diphosphate.. Functionally, RNA polymerase that catalyzes the synthesis of short RNA molecules used as primers for DNA polymerase during DNA replication. The protein is DNA primase of Staphylococcus epidermidis (strain ATCC 12228 / FDA PCI 1200).